A 158-amino-acid chain; its full sequence is Chromobox protein homolog 7 (158 aa).

One can recognise a Chromo domain in the interval 11–69 (FAVESIRKKRVRKGKVEYLVKWKGWPPKYSTWEPEEHILDPRLVMAYEEKEERDRASGY). Residues 60–127 (KEERDRASGY…WTPTLPSSEV (68 aa)) form a disordered region. Residues 68-78 (GYRKRGPKPRR) are compositionally biased toward basic residues.

Component of a PRC1-like complex. Distinct PRC1-like core complexes are composed of a RING1 subunit (RING1B or RING1A), one of the six PCGF proteins (PCGF1-6), one PHC protein (PHC1-3) and one of the CBX proteins (CBX2, CBX4, CBX6, CBX7 or CBX8). The composition of the PRC1 complex may differ between the PRC1 complex in pluripotent embryonic stem cells containing RNF2, CBX7 and PCGF2, and the PRC1 complex in differentiating cells containing RNF2, CBX2, CBX4 and BMI1. Interacts with RING1. Interacts with RNF2, PHC1 and PCGF2. Interacts (via chromodomain) with histone H3K9Me3 and H3K27me3. Interacts with H3K9Me2 and H4K20Me1. Interacts (via chromodomain) with single-stranded and double-stranded RNA; RNA binding seems to be required for the localization to chromatin. Interacts with PCGF1, PCGF3, PCGF5 and PCGF6. Expressed in embryonic stem cells.

The protein localises to the nucleus. Its subcellular location is the chromosome. Component of a Polycomb group (PcG) multiprotein PRC1-like complex, a complex class required to maintain the transcriptionally repressive state of many genes, including Hox genes, throughout development. PcG PRC1 complex acts via chromatin remodeling and modification of histones; it mediates monoubiquitination of histone H2A 'Lys-119', rendering chromatin heritably changed in its expressibility. Promotes histone H3 trimethylation at 'Lys-9' (H3K9me3). Binds to histone H3 trimethylated at 'Lys-9' (H3K9me3) or at 'Lys-27' (H3K27me3). Trimethylation at 'Lys-27' (H3K27me3) is important for chromatin recruitment. May possibly also bind trimethylated lysine residues in other proteins (in vitro). Binds non-coding, single-stranded RNA and double-stranded RNA. Plays a role in the timely repression of differentiation-specific genes in pluripotent embryonic stem cells to maintain the undifferentiated state. Regulator of cellular lifespan by maintaining the repression of CDKN2A, but not by inducing telomerase activity. The chain is Chromobox protein homolog 7 (Cbx7) from Mus musculus (Mouse).